The following is a 386-amino-acid chain: Patatin-2-Kuras 3 (386 aa).

The first 23 residues, 1–23 (MATTKSVLVLFFMILATTSSTCA), serve as a signal peptide directing secretion. The region spanning 32 to 229 (LSIDGGGIKG…TVGDPALLSL (198 aa)) is the PNPLA domain. The short motif at 36–41 (GGGIKG) is the GXGXXG element. The GXSXG signature appears at 75 to 79 (GTSTG). The active-site Nucleophile is Ser-77. Asn-115 carries N-linked (GlcNAc...) asparagine glycosylation. Residue Asp-215 is the Proton acceptor of the active site. Residues 215–217 (DGA) carry the DGA/G motif. A coiled-coil region spans residues 321-384 (ENALTGTTTE…DRKKLRANKA (64 aa)).

This sequence belongs to the patatin family. Tuber.

It is found in the vacuole. Probable lipolytic acyl hydrolase (LAH), an activity which is thought to be involved in the response of tubers to pathogens. This chain is Patatin-2-Kuras 3 (pat2-k3), found in Solanum tuberosum (Potato).